The primary structure comprises 433 residues: Serine hydroxymethyltransferase (433 aa).

(6S)-5,6,7,8-tetrahydrofolate is bound by residues leucine 132 and 136–138 (GHL). At lysine 241 the chain carries N6-(pyridoxal phosphate)lysine.

It belongs to the SHMT family. Homodimer. It depends on pyridoxal 5'-phosphate as a cofactor.

The protein resides in the cytoplasm. It carries out the reaction (6R)-5,10-methylene-5,6,7,8-tetrahydrofolate + glycine + H2O = (6S)-5,6,7,8-tetrahydrofolate + L-serine. Its pathway is one-carbon metabolism; tetrahydrofolate interconversion. It functions in the pathway amino-acid biosynthesis; glycine biosynthesis; glycine from L-serine: step 1/1. Catalyzes the reversible interconversion of serine and glycine with tetrahydrofolate (THF) serving as the one-carbon carrier. This reaction serves as the major source of one-carbon groups required for the biosynthesis of purines, thymidylate, methionine, and other important biomolecules. Also exhibits THF-independent aldolase activity toward beta-hydroxyamino acids, producing glycine and aldehydes, via a retro-aldol mechanism. This chain is Serine hydroxymethyltransferase, found in Nitrobacter winogradskyi (strain ATCC 25391 / DSM 10237 / CIP 104748 / NCIMB 11846 / Nb-255).